Consider the following 117-residue polypeptide: Ribonuclease P protein component (117 aa).

The protein belongs to the RnpA family. As to quaternary structure, consists of a catalytic RNA component (M1 or rnpB) and a protein subunit.

The catalysed reaction is Endonucleolytic cleavage of RNA, removing 5'-extranucleotides from tRNA precursor.. Its function is as follows. RNaseP catalyzes the removal of the 5'-leader sequence from pre-tRNA to produce the mature 5'-terminus. It can also cleave other RNA substrates such as 4.5S RNA. The protein component plays an auxiliary but essential role in vivo by binding to the 5'-leader sequence and broadening the substrate specificity of the ribozyme. This Desulforapulum autotrophicum (strain ATCC 43914 / DSM 3382 / VKM B-1955 / HRM2) (Desulfobacterium autotrophicum) protein is Ribonuclease P protein component.